The sequence spans 85 residues: Sugar transporter SemiSWEET (85 aa).

One can recognise a PQ-loop domain in the interval 2–59 (ENLIGYVAAFLTTVSFLPQVLRVVMTKQTRDISRNMYIMFFLGVVLWFVYGILRSDLP). 3 helical membrane-spanning segments follow: residues 5–25 (IGYV…LRVV), 33–53 (ISRN…VYGI), and 57–77 (DLPI…ILYY).

Homodimer.

Its subcellular location is the cell membrane. Functionally, the homodimer mediates transmembrane sugar transport down a concentration gradient. Transport is probably effected by rocking-type movements, where a cargo-binding cavity opens first on one and then on the other side of the membrane. The sequence is that of Sugar transporter SemiSWEET from Leptospira biflexa serovar Patoc (strain Patoc 1 / ATCC 23582 / Paris).